Reading from the N-terminus, the 331-residue chain is Protoheme IX farnesyltransferase (331 aa).

8 helical membrane-spanning segments follow: residues 63–83, 109–129, 132–152, 160–180, 188–208, 215–235, 241–261, and 294–314; these read LACTLGGGALAAAAAGALNCL, SVFIGAVACTLVSSALLVSGV, LAAGLTLLGLCSYVLLYTAFL, IVFGGVAGAIPPLVGASAAAG, WLFSLVMVWTPAHFWALAILL, VGIPMLPTVSGPFVTAKAISV, VFLSFLGCFVLPEGGLLYGIL, and ILYMFGVCFLLVISRLQVSIV.

The protein belongs to the UbiA prenyltransferase family. Protoheme IX farnesyltransferase subfamily.

It is found in the cell inner membrane. The enzyme catalyses heme b + (2E,6E)-farnesyl diphosphate + H2O = Fe(II)-heme o + diphosphate. It functions in the pathway porphyrin-containing compound metabolism; heme O biosynthesis; heme O from protoheme: step 1/1. In terms of biological role, converts heme B (protoheme IX) to heme O by substitution of the vinyl group on carbon 2 of heme B porphyrin ring with a hydroxyethyl farnesyl side group. This Prochlorococcus marinus (strain NATL1A) protein is Protoheme IX farnesyltransferase.